Here is a 175-residue protein sequence, read N- to C-terminus: MSASSTEATNLAGKTCLITGGAGGLGRALAAAFLRAGANVAICDLNEERLKQASAELSGTGAGSLLAANADVADPAAAQQLFDRITAKFRTVDVLVNNAAIMDRFDPVADLDHELWDRVISVNLAGPFIFSKLALRVMLQQPKPDGCILNIASGAAKGGWLAGRCDLGLARICRG.

The NADP(+) site is built by isoleucine 18, aspartate 71, asparagine 98, and lysine 132.

It belongs to the short-chain dehydrogenases/reductases (SDR) family.

It participates in secondary metabolite biosynthesis; terpenoid biosynthesis. Its function is as follows. Short chain dehydrogenase/reductase; part of the gene cluster that mediates the biosynthesis of diterpenoid pyrones. The first step of the pathway is the synthesis of the alpha-pyrone moiety by the polyketide synthase dpmpA via condensation of one acetyl-CoA starter unit with 3 malonyl-CoA units and 2 methylations. The alpha-pyrone is then combined with geranylgeranyl pyrophosphate (GGPP) formed by the GGPP synthase dpmpD through the action of the prenyltransferase dpmpC to yield a linear alpha-pyrone diterpenoid. Subsequent steps in the diterpenoid pyrone biosynthetic pathway involve the decalin core formation, which is initiated by the epoxidation of the C10-C11 olefin by the FAD-dependent oxidoreductase dpmpE, and is followed by a cyclization cascade catalyzed by the terpene cyclase dpmpB. The short chain dehydrogenase/reductase dpmpG then oxidizes the 8S hydroxy group to a ketone and the short chain dehydrogenase/reductase dpmpH reduces the ketone to the 8R hydroxy group to yield higginsianin B. Higginsianin B is further methylated by the methyltransferase dpmpI to produce the intermediate named FDDP B. The cytochrome P450 monooxygenase dpmpJ then oxidizes the C-26 methyl to primary alcohol, producing the final diterpenoid pyrone with a C-26 primary alcohol on the gamma-pyrone moiety named FDDP C. This chain is Short chain dehydrogenase/reductase dpmpG, found in Macrophomina phaseolina (strain MS6) (Charcoal rot fungus).